A 314-amino-acid chain; its full sequence is Ribonuclease Z (314 aa).

7 residues coordinate Zn(2+): His-60, His-62, Asp-64, His-65, His-140, Asp-209, and His-269. Asp-64 functions as the Proton acceptor in the catalytic mechanism.

Belongs to the RNase Z family. In terms of assembly, homodimer. Requires Zn(2+) as cofactor.

It carries out the reaction Endonucleolytic cleavage of RNA, removing extra 3' nucleotides from tRNA precursor, generating 3' termini of tRNAs. A 3'-hydroxy group is left at the tRNA terminus and a 5'-phosphoryl group is left at the trailer molecule.. In terms of biological role, zinc phosphodiesterase, which displays some tRNA 3'-processing endonuclease activity. Probably involved in tRNA maturation, by removing a 3'-trailer from precursor tRNA. The chain is Ribonuclease Z from Methanococcus maripaludis (strain C5 / ATCC BAA-1333).